The following is a 579-amino-acid chain: MSALRPLLLLLLPLCPGPGPGPGSEAKVTRSCAETRQVLGARGYSLNLIPPALISGEHLRVCPQEYTCCSSETEQRLIRETEATFRGLVEDSGSFLVHTLAARHRKFDEFFLEMLSVAQHSLTQLFSHSYGRLYAQHALIFNGLFSRLRDFYGESGEGLDDTLADFWAQLLERVFPLLHPQYSFPPDYLLCLSRLASSTDGSLQPFGDSPRRLRLQITRTLVAARAFVQGLETGRNVVSEALKVPVSEGCSQALMRLIGCPLCRGVPSLMPCQGFCLNVVRGCLSSRGLEPDWGNYLDGLLILADKLQGPFSFELTAESIGVKISEGLMYLQENSAKVSAQVFQECGPPDPVPARNRRAPPPREEAGRLWSMVTEEERPTTAAGTNLHRLVWELRERLARMRGFWARLSLTVCGDSRMAADASLEAAPCWTGAGRGRYLPPVVGGSPAEQVNNPELKVDASGPDVPTRRRRLQLRAATARMKTAALGHDLDGQDADEDASGSGGGQQYADDWMAGAVAPPARPPRPPYPPRRDGSGGKGGGGSARYNQGRSRSGGASIGFHTQTILILSLSALALLGPR.

The first 23 residues, 1-23 (MSALRPLLLLLLPLCPGPGPGPG), serve as a signal peptide directing secretion. O-linked (Xyl...) (heparan sulfate) serine glycosylation is found at serine 55, serine 92, and serine 155. 2 disordered regions span residues 444-468 (GGSPAEQVNNPELKVDASGPDVPTR) and 485-555 (ALGH…RSGG). O-linked (Xyl...) (heparan sulfate) serine glycosylation is found at serine 500 and serine 502. Residues 520–529 (PARPPRPPYP) show a composition bias toward pro residues. The GPI-anchor amidated glycine moiety is linked to residue glycine 554. Positions 555-579 (GASIGFHTQTILILSLSALALLGPR) are cleaved as a propeptide — removed in mature form.

It belongs to the glypican family. As to quaternary structure, interacts (via heparan sulfate) with PTN; this interaction promotes neurite outgrowth through binding of PTN with chondroitin sulfate of proteoglycans, thereby releasing PTPRS of chondroitin sulfate proteoglycans (CSPGs) and leading to binding with heparan sulfate of GPC2. Interacts (heparan sulfate chain) with MDK; this interaction is inhibited by heparin followed by chondroitin sulfate E; this interaction induces GPC2 clustering through heparan sulfate chain; this interaction induces neuronal cell adhesion and neurite outgrowth.

Its subcellular location is the cell membrane. It localises to the secreted. The protein resides in the extracellular space. Its function is as follows. Cell surface proteoglycan that bears heparan sulfate. May fulfill a function related to the motile behaviors of developing neurons. The sequence is that of Glypican-2 (GPC2) from Homo sapiens (Human).